We begin with the raw amino-acid sequence, 293 residues long: Pyridoxal 5'-phosphate synthase subunit PdxS (293 aa).

A D-ribose 5-phosphate-binding site is contributed by Asp-23. The active-site Schiff-base intermediate with D-ribose 5-phosphate is Lys-80. Gly-152 contributes to the D-ribose 5-phosphate binding site. D-glyceraldehyde 3-phosphate is bound at residue Arg-164. D-ribose 5-phosphate-binding positions include Gly-213 and 234-235 (GS).

Belongs to the PdxS/SNZ family. In terms of assembly, in the presence of PdxT, forms a dodecamer of heterodimers.

The enzyme catalyses aldehydo-D-ribose 5-phosphate + D-glyceraldehyde 3-phosphate + L-glutamine = pyridoxal 5'-phosphate + L-glutamate + phosphate + 3 H2O + H(+). It participates in cofactor biosynthesis; pyridoxal 5'-phosphate biosynthesis. In terms of biological role, catalyzes the formation of pyridoxal 5'-phosphate from ribose 5-phosphate (RBP), glyceraldehyde 3-phosphate (G3P) and ammonia. The ammonia is provided by the PdxT subunit. Can also use ribulose 5-phosphate and dihydroxyacetone phosphate as substrates, resulting from enzyme-catalyzed isomerization of RBP and G3P, respectively. The protein is Pyridoxal 5'-phosphate synthase subunit PdxS of Chloroflexus aggregans (strain MD-66 / DSM 9485).